Consider the following 385-residue polypeptide: Transcription termination factor 2, mitochondrial (385 aa).

The transit peptide at 1–35 (MPWRLPTGHQLCRLCLLRKPRPALKIKPSSACVTY) directs the protein to the mitochondrion.

This sequence belongs to the mTERF family. Monomer.

The protein resides in the mitochondrion matrix. The protein localises to the mitochondrion nucleoid. Its function is as follows. Binds mitochondrial DNA and plays a role in the regulation of transcription of mitochondrial mRNA and rRNA species. The polypeptide is Transcription termination factor 2, mitochondrial (Mterf2) (Mus musculus (Mouse)).